Reading from the N-terminus, the 295-residue chain is MFCLQSSQALQVLENSLRKHLPESLKVYGTVFHINQGNPFKLKTLVDKWPDFNTVVIRPQEEDMTDDLDHYNNTYLVYSKDPKHCQEFLGSSEVINWKQHLQIQSSQSDLGKVIESLGATNLGKVKHKQCFLYMVCQTAKKLAPSLMDAKNLVVSRNKLTPLDQQLFKFASLDVTHAALVNSLWHFGGNEKSQKFIERCIFTFPSFCIMGPEGTPVSWTLMDHTGELRMGGTLPKYRRQSLIYHVASQQIQTLEKLGFPMYAHVDKANFTVQRMVGLLGQILLPCTWNQWNCVPL.

Lysine 41 is subject to N6-acetyllysine; alternate. Lysine 41 carries the N6-succinyllysine; alternate modification. Lysine 43 bears the N6-acetyllysine mark. Lysine 48 is modified (N6-acetyllysine; alternate). An N6-succinyllysine; alternate modification is found at lysine 48. N6-acetyllysine is present on residues lysine 80 and lysine 83. Lysine 124, lysine 128, and lysine 140 each carry N6-acetyllysine; alternate. N6-succinyllysine; alternate occurs at positions 124, 128, and 140. An N6-acetyllysine modification is found at lysine 150. Lysine 255 carries the N6-acetyllysine; alternate modification. At lysine 255 the chain carries N6-succinyllysine; alternate.

This sequence belongs to the glycine N-acyltransferase family. In terms of assembly, binds to microtubules.

It localises to the cytoplasm. The protein resides in the cytoskeleton. Its subcellular location is the microtubule organizing center. The protein localises to the centrosome. It carries out the reaction an acyl-CoA + glycine = an N-acylglycine + CoA + H(+). Its function is as follows. Acyltransferase which transfers the acyl group to the N-terminus of glycine. Can conjugate a multitude of substrates to form a variety of N-acylglycines. This is Glycine N-acyltransferase-like protein Keg1 (Keg1) from Mus musculus (Mouse).